A 423-amino-acid polypeptide reads, in one-letter code: Imidazolonepropionase (423 aa).

The Fe(3+) site is built by His-87 and His-89. Zn(2+)-binding residues include His-87 and His-89. 4-imidazolone-5-propanoate is bound by residues Arg-96, Tyr-159, and His-192. Position 159 (Tyr-159) interacts with N-formimidoyl-L-glutamate. His-257 contacts Fe(3+). His-257 provides a ligand contact to Zn(2+). Glu-260 contacts 4-imidazolone-5-propanoate. Position 331 (Asp-331) interacts with Fe(3+). Position 331 (Asp-331) interacts with Zn(2+). N-formimidoyl-L-glutamate contacts are provided by Asn-333 and Gly-335. Ser-336 contributes to the 4-imidazolone-5-propanoate binding site.

It belongs to the metallo-dependent hydrolases superfamily. HutI family. Zn(2+) is required as a cofactor. Requires Fe(3+) as cofactor.

It is found in the cytoplasm. It carries out the reaction 4-imidazolone-5-propanoate + H2O = N-formimidoyl-L-glutamate. Its pathway is amino-acid degradation; L-histidine degradation into L-glutamate; N-formimidoyl-L-glutamate from L-histidine: step 3/3. In terms of biological role, catalyzes the hydrolytic cleavage of the carbon-nitrogen bond in imidazolone-5-propanoate to yield N-formimidoyl-L-glutamate. It is the third step in the universal histidine degradation pathway. The protein is Imidazolonepropionase of Porphyromonas gingivalis (strain ATCC 33277 / DSM 20709 / CIP 103683 / JCM 12257 / NCTC 11834 / 2561).